The primary structure comprises 257 residues: Triosephosphate isomerase (257 aa).

Residues Asn12 and Lys14 each contribute to the substrate site. The active-site Electrophile is His98. The active-site Proton acceptor is the Glu169.

This sequence belongs to the triosephosphate isomerase family. In terms of assembly, homodimer.

It carries out the reaction D-glyceraldehyde 3-phosphate = dihydroxyacetone phosphate. The protein operates within carbohydrate biosynthesis; gluconeogenesis. It participates in carbohydrate degradation; glycolysis; D-glyceraldehyde 3-phosphate from glycerone phosphate: step 1/1. This is Triosephosphate isomerase (tpiA) from Dictyostelium discoideum (Social amoeba).